The chain runs to 259 residues: NAD kinase (259 aa).

The active-site Proton acceptor is the D49. Residues 49–50, R54, 118–119, D148, A156, 159–164, and A183 each bind NAD(+); these read DG, NE, and TAYNYS.

This sequence belongs to the NAD kinase family. The cofactor is a divalent metal cation.

It localises to the cytoplasm. The catalysed reaction is NAD(+) + ATP = ADP + NADP(+) + H(+). Functionally, involved in the regulation of the intracellular balance of NAD and NADP, and is a key enzyme in the biosynthesis of NADP. Catalyzes specifically the phosphorylation on 2'-hydroxyl of the adenosine moiety of NAD to yield NADP. This Xylella fastidiosa (strain 9a5c) protein is NAD kinase.